Here is a 431-residue protein sequence, read N- to C-terminus: Histidine--tRNA ligase (431 aa).

This sequence belongs to the class-II aminoacyl-tRNA synthetase family. As to quaternary structure, homodimer.

The protein resides in the cytoplasm. The catalysed reaction is tRNA(His) + L-histidine + ATP = L-histidyl-tRNA(His) + AMP + diphosphate + H(+). This is Histidine--tRNA ligase from Neisseria meningitidis serogroup C / serotype 2a (strain ATCC 700532 / DSM 15464 / FAM18).